Reading from the N-terminus, the 123-residue chain is Large ribosomal subunit protein bL12 (123 aa).

Belongs to the bacterial ribosomal protein bL12 family. Homodimer. Part of the ribosomal stalk of the 50S ribosomal subunit. Forms a multimeric L10(L12)X complex, where L10 forms an elongated spine to which 2 to 4 L12 dimers bind in a sequential fashion. Binds GTP-bound translation factors.

Its function is as follows. Forms part of the ribosomal stalk which helps the ribosome interact with GTP-bound translation factors. Is thus essential for accurate translation. This is Large ribosomal subunit protein bL12 from Pseudoalteromonas atlantica (strain T6c / ATCC BAA-1087).